The sequence spans 212 residues: Peptide methionine sulfoxide reductase MsrA (212 aa).

Residue Cys52 is part of the active site.

This sequence belongs to the MsrA Met sulfoxide reductase family.

The enzyme catalyses L-methionyl-[protein] + [thioredoxin]-disulfide + H2O = L-methionyl-(S)-S-oxide-[protein] + [thioredoxin]-dithiol. The catalysed reaction is [thioredoxin]-disulfide + L-methionine + H2O = L-methionine (S)-S-oxide + [thioredoxin]-dithiol. In terms of biological role, has an important function as a repair enzyme for proteins that have been inactivated by oxidation. Catalyzes the reversible oxidation-reduction of methionine sulfoxide in proteins to methionine. This chain is Peptide methionine sulfoxide reductase MsrA, found in Escherichia coli O6:K15:H31 (strain 536 / UPEC).